The primary structure comprises 414 residues: MRVILLLAFLISLTECQWTSEDLALYDLVEEVGVNFYEWFDIPRDASSNQVKKAYRKLTLEWHPDRNSAPDATEKFRQVAGIYEVLKTTELREKYDNVLENGLPSWRHPMYYYRRMRKLAWYEGILVLLFIGTIAHYLMMWAAYFEKTLVYKQNVKKSRKSKKEDPAEAEKLMKQALEEYLPKYSELLPIILARGTVTLFKNLALTAKDAMTPKEVEPEEPTEEELAQQRRQQRAAAAPQQLEFKFEVAQGMKAVSTNDPEMEKKYAAENEVVAQKQSGATWTPDELASLVRLSTEKYPAGTPNRWEQMGRVLNRSAEDVIAMAGKMKQMKQEDYTKLLMTTIQQSVPVEEKSEDDWSQAEQKAFETALQKYPKGTDERWERISEEIGSKTKKQVMVRFKQLAEMIRKKKTNDT.

The N-terminal stretch at 1–16 (MRVILLLAFLISLTEC) is a signal peptide. In terms of domain architecture, Myb-like 1 spans 20–59 (SEDLALYDLVEEVGVNFYEWFDIPRDASSNQVKKAYRKLT). The J domain maps to 35–99 (NFYEWFDIPR…ELREKYDNVL (65 aa)). The helical transmembrane segment at 125–145 (ILVLLFIGTIAHYLMMWAAYF) threads the bilayer. A disordered region spans residues 211–234 (MTPKEVEPEEPTEEELAQQRRQQR). A compositionally biased stretch (acidic residues) spans 217 to 226 (EPEEPTEEEL). One can recognise a Myb-like 2 domain in the interval 274-320 (AQKQSGATWTPDELASLVRLSTEKYPAGTPNRWEQMGRVLNRSAEDV). An SANT domain is found at 352–407 (KSEDDWSQAEQKAFETALQKYPKGTDERWERISEEIGSKTKKQVMVRFKQLAEMIR).

The protein resides in the nucleus membrane. This is an uncharacterized protein from Caenorhabditis elegans.